We begin with the raw amino-acid sequence, 96 residues long: Large ribosomal subunit protein uL23 (96 aa).

Belongs to the universal ribosomal protein uL23 family. In terms of assembly, part of the 50S ribosomal subunit. Contacts protein L29, and trigger factor when it is bound to the ribosome.

Its function is as follows. One of the early assembly proteins it binds 23S rRNA. One of the proteins that surrounds the polypeptide exit tunnel on the outside of the ribosome. Forms the main docking site for trigger factor binding to the ribosome. In Maridesulfovibrio salexigens (strain ATCC 14822 / DSM 2638 / NCIMB 8403 / VKM B-1763) (Desulfovibrio salexigens), this protein is Large ribosomal subunit protein uL23.